Reading from the N-terminus, the 316-residue chain is 4-hydroxyphenylacetate decarboxylase activating enzyme (316 aa).

The 288-residue stretch at 20–307 (HDGPGCRTTV…QDIFLDNGIA (288 aa)) folds into the Radical SAM core domain. [4Fe-4S] cluster-binding residues include Cys-34, Cys-38, Cys-41, Cys-60, Cys-66, Cys-69, and Cys-105. Residue 40–42 (WCA) coordinates S-adenosyl-L-methionine. The 4Fe-4S ferredoxin-type domain maps to 84 to 115 (NKPVIDWNICKDCESFECVNSCYYNAFKLCAK). Residues Gly-144, 193-195 (DIK), and His-267 each bind S-adenosyl-L-methionine.

This sequence belongs to the organic radical-activating enzymes family. Monomer. [4Fe-4S] cluster serves as cofactor.

The catalysed reaction is glycyl-[protein] + reduced [flavodoxin] + S-adenosyl-L-methionine = glycin-2-yl radical-[protein] + semiquinone [flavodoxin] + 5'-deoxyadenosine + L-methionine + H(+). Its function is as follows. Catalyzes activation of 4-hydroxyphenylacetate decarboxylase under anaerobic conditions by generation of an organic free radical on a glycine residue, via a homolytic cleavage of S-adenosyl-L-methionine (SAM). The sequence is that of 4-hydroxyphenylacetate decarboxylase activating enzyme from Clostridioides difficile (Peptoclostridium difficile).